The chain runs to 118 residues: Large ribosomal subunit protein bL20 (118 aa).

The protein belongs to the bacterial ribosomal protein bL20 family.

Binds directly to 23S ribosomal RNA and is necessary for the in vitro assembly process of the 50S ribosomal subunit. It is not involved in the protein synthesizing functions of that subunit. This chain is Large ribosomal subunit protein bL20, found in Sulfurimonas denitrificans (strain ATCC 33889 / DSM 1251) (Thiomicrospira denitrificans (strain ATCC 33889 / DSM 1251)).